A 292-amino-acid chain; its full sequence is NAD kinase (292 aa).

Asp73 functions as the Proton acceptor in the catalytic mechanism. Residues 73–74 (DG), 147–148 (NE), His158, Arg175, Asp177, 188–193 (TAYSLS), and Gln247 contribute to the NAD(+) site.

This sequence belongs to the NAD kinase family. The cofactor is a divalent metal cation.

It is found in the cytoplasm. It catalyses the reaction NAD(+) + ATP = ADP + NADP(+) + H(+). In terms of biological role, involved in the regulation of the intracellular balance of NAD and NADP, and is a key enzyme in the biosynthesis of NADP. Catalyzes specifically the phosphorylation on 2'-hydroxyl of the adenosine moiety of NAD to yield NADP. The protein is NAD kinase of Erwinia tasmaniensis (strain DSM 17950 / CFBP 7177 / CIP 109463 / NCPPB 4357 / Et1/99).